The primary structure comprises 286 residues: 4-diphosphocytidyl-2-C-methyl-D-erythritol kinase (286 aa).

Residue Lys-11 is part of the active site. 94-104 (PMGGGIGGGSS) contacts ATP. Asp-136 is an active-site residue.

The protein belongs to the GHMP kinase family. IspE subfamily.

It catalyses the reaction 4-CDP-2-C-methyl-D-erythritol + ATP = 4-CDP-2-C-methyl-D-erythritol 2-phosphate + ADP + H(+). Its pathway is isoprenoid biosynthesis; isopentenyl diphosphate biosynthesis via DXP pathway; isopentenyl diphosphate from 1-deoxy-D-xylulose 5-phosphate: step 3/6. Its function is as follows. Catalyzes the phosphorylation of the position 2 hydroxy group of 4-diphosphocytidyl-2C-methyl-D-erythritol. This Pseudomonas putida (strain ATCC 700007 / DSM 6899 / JCM 31910 / BCRC 17059 / LMG 24140 / F1) protein is 4-diphosphocytidyl-2-C-methyl-D-erythritol kinase.